A 1589-amino-acid chain; its full sequence is Paternally-expressed gene 3 protein (1589 aa).

The region spanning 46–128 (HQRFRNLIYV…TLLENYKEMY (83 aa)) is the SCAN box domain. 3 disordered regions span residues 128–230 (YQPE…ESYQ), 266–306 (DGHS…RRGI), and 319–349 (KFIK…MSDD). Over residues 129 to 142 (QPEDDNNSDVTSDD) the composition is skewed to acidic residues. Composition is skewed to basic and acidic residues over residues 143 to 152 (DMTRNRRESS), 161 to 182 (SGDR…DRWS), 206 to 225 (FEMD…RSQD), and 295 to 306 (PEAKKSTHRRGI). 3 consecutive C2H2-type zinc fingers follow at residues 454 to 476 (YVCD…QIMH), 507 to 529 (FECK…RKIH), and 565 to 587 (YECR…QKIH). Residues 588 to 607 (FGDDKDNEREHERERERGET) are compositionally biased toward basic and acidic residues. The disordered stretch occupies residues 588–610 (FGDDKDNEREHERERERGETFRP). A C2H2-type 4 zinc finger spans residues 627 to 649 (YECKVCGETFLHSSSLKEHQKIH). The interval 838 to 930 (LVASKPPRSH…EFSVPSSNVR (93 aa)) is disordered. The span at 868-881 (LNDKRQKIPARENP) shows a compositional bias: basic and acidic residues. A C2H2-type 5 zinc finger spans residues 969-991 (YECQECGECFAHSSDLTEHQKIH). The segment at 1056-1104 (EKSHGEESQGENTDGEETHSEETHGQETIEDPVIQSSDMEDPQKDDPDD) is disordered. Residues 1071–1082 (EETHSEETHGQE) are compositionally biased toward basic and acidic residues. 5 C2H2-type zinc fingers span residues 1107–1129 (YECE…QKVH), 1163–1185 (YECP…QRIH), 1225–1247 (IRCL…MRLH), 1282–1304 (FECA…VTVH), and 1332–1354 (YECK…KELH). The segment covering 1396–1416 (AEPEVEAAEPEVEAAEPEVEA) has biased composition (acidic residues). Residues 1396–1496 (AEPEVEAAEP…GIEDPEEGED (101 aa)) form a disordered region. 7 consecutive repeat copies span residues 1398–1404 (PEVEAAE), 1405–1411 (PEVEAAE), 1412–1418 (PEVEAAE), 1419–1423 (PNGEA), 1426–1430 (PDGEA), 1433–1437 (PIGEA), and 1440–1444 (PNGEA). The tract at residues 1398–1418 (PEVEAAEPEVEAAEPEVEAAE) is 3 X 7 AA repeat of P-E-V-E-A-A-E. The segment at 1419-1444 (PNGEAEGPDGEAAEPIGEAGQPNGEA) is 4 X 5 AA repeat of P-X-G-E-A. 2 stretches are compositionally biased toward acidic residues: residues 1450–1467 (DADE…ERAE) and 1476–1496 (PEGD…EGED). 2 consecutive C2H2-type zinc fingers follow at residues 1506 to 1528 (YDCH…LKTH) and 1565 to 1587 (FKCD…QNTH).

This sequence belongs to the krueppel C2H2-type zinc-finger protein family. As to quaternary structure, homodimer. Interacts with SIAH1A and SIAH2. Interacts with TRAF2.

It is found in the nucleus. It localises to the cytoplasm. Induces apoptosis in cooperation with SIAH1A. Acts as a mediator between p53/TP53 and BAX in a neuronal death pathway that is activated by DNA damage. Acts synergistically with TRAF2 and inhibits TNF induced apoptosis through activation of NF-kappa-B. This is Paternally-expressed gene 3 protein (PEG3) from Gorilla gorilla gorilla (Western lowland gorilla).